A 330-amino-acid chain; its full sequence is 4-hydroxythreonine-4-phosphate dehydrogenase (330 aa).

Substrate is bound by residues His-133 and Thr-134. The a divalent metal cation site is built by His-163, His-208, and His-263. Residues Lys-271, Asn-280, and Arg-289 each contribute to the substrate site.

The protein belongs to the PdxA family. Homodimer. Requires Zn(2+) as cofactor. Mg(2+) is required as a cofactor. Co(2+) serves as cofactor.

Its subcellular location is the cytoplasm. It carries out the reaction 4-(phosphooxy)-L-threonine + NAD(+) = 3-amino-2-oxopropyl phosphate + CO2 + NADH. Its pathway is cofactor biosynthesis; pyridoxine 5'-phosphate biosynthesis; pyridoxine 5'-phosphate from D-erythrose 4-phosphate: step 4/5. Its function is as follows. Catalyzes the NAD(P)-dependent oxidation of 4-(phosphooxy)-L-threonine (HTP) into 2-amino-3-oxo-4-(phosphooxy)butyric acid which spontaneously decarboxylates to form 3-amino-2-oxopropyl phosphate (AHAP). In Azoarcus sp. (strain BH72), this protein is 4-hydroxythreonine-4-phosphate dehydrogenase.